Here is a 498-residue protein sequence, read N- to C-terminus: Cytotardin (498 aa).

Residues 18 to 58 (DRVHSKDELQALNTRLAKYIDKIRNLENENVALQRQLQTAE) form a coil 1A region. An IF rod domain is found at 22–378 (SKDELQALNT…KLLSGEEQRL (357 aa)). The segment at 59–69 (QTTVTEIHRVS) is linker 1. Residues 70 to 213 (KNYDEELAKL…ENLREEKSQR (144 aa)) form a coil 1B region. Positions 214-231 (QYLLHDLQRGLQDEFESK) are linker 2. Residues 232-371 (LVQQLNELRA…AELATYNKLL (140 aa)) are coil 2. Positions 381–425 (DGSGTVIRRPTGGATGTGSGIYGGTGSGGYSRDIGSTTTTKTTYT) are disordered. The segment covering 393–409 (GATGTGSGIYGGTGSGG) has biased composition (gly residues).

This sequence belongs to the intermediate filament family.

It localises to the cytoplasm. The protein localises to the cell cortex. Intermediate filament (IF) protein that forms both short filaments and extensive cytoskeletal networks which most likely are homomeric. Some of the cytotardin arrays display cage-like perinuclear structures, while others are located in the periphery close to the cell membrane. The entire tardigrade body is ensheathed by a grid of belt-like filaments formed by the cytotardin protein, which retain their integrity even in contracted specimens. The belt-like structures encircling each epidermal cell might help to resist the shearing forces that arise during freezing and thawing cycles, whereas the dense meshwork at the basis of each claw and around the stylets might provide the tissue stability necessary for locomotion and feeding. The polypeptide is Cytotardin (Hypsibius exemplaris (Freshwater tardigrade)).